A 268-amino-acid polypeptide reads, in one-letter code: Hemolysin C (268 aa).

CBS domains are found at residues 52–111 (MVPR…NFSL) and 114–171 (ILHK…IRDE).

The protein belongs to the UPF0053 family.

Bacterial hemolysins are exotoxins that attack blood cell membranes and cause cell rupture by mechanisms not clearly defined. This is Hemolysin C (tlyC) from Brachyspira hyodysenteriae (Treponema hyodysenteriae).